A 203-amino-acid polypeptide reads, in one-letter code: Ponticulin-like protein H (203 aa).

Positions 1-20 are cleaved as a signal peptide; that stretch reads MKLLNSLVLLAALCAITANG. Asn58 carries an N-linked (GlcNAc...) asparagine glycan. A compositionally biased stretch (low complexity) spans 127 to 168; that stretch reads SDSTNPTSTPSTTPSATPTVTPSTTPTVTPTVTPSTTPTVAP. The interval 127 to 183 is disordered; it reads SDSTNPTSTPSTTPSATPTVTPSTTPTVTPTVTPSTTPTVAPTVPPTTPPSTTTGSG. A lipid anchor (GPI-like-anchor amidated serine) is attached at Ser182. Residues 183 to 203 constitute a propeptide, removed in mature form; sequence GSTVVASFGLIVSILLASLAL.

This sequence belongs to the ponticulin family. Post-translationally, the GPI-like-anchor contains a phosphoceramide group, rather than a phosphatidyl group.

Its subcellular location is the cell membrane. Its function is as follows. Binds F-actin and nucleates actin assembly. In Dictyostelium discoideum (Social amoeba), this protein is Ponticulin-like protein H (ponH).